The chain runs to 535 residues: ATP-dependent RNA helicase DBP3 (535 aa).

A compositionally biased stretch (basic and acidic residues) spans 1 to 21 (MSKHELKDKKRKSVDGEDVSK). The tract at residues 1-82 (MSKHELKDKK…GSETAPVGDS (82 aa)) is disordered. Over residues 22–33 (SKKVKKDKKDKK) the composition is skewed to basic residues. Residues 34–72 (DKKAKDGNDKVKDKKDKNKKDKSKTDKNLKEVQETEAHT) show a composition bias toward basic and acidic residues. A Q motif motif is present at residues 125–151 (LSFSHLNLHSAIQKEISKFPKPTPIQA). In terms of domain architecture, Helicase ATP-binding spans 154–327 (WPYLLAGKDV…STFMRAPVKV (174 aa)). 167–174 (AETGSGKT) provides a ligand contact to ATP. The DEAD box signature appears at 274–277 (DEAD). The 154-residue stretch at 352-505 (KKEKRLLELL…PVPEELMKFG (154 aa)) folds into the Helicase C-terminal domain.

The protein belongs to the DEAD box helicase family. DDX5/DBP2 subfamily.

Its subcellular location is the nucleus. It localises to the nucleolus. The catalysed reaction is ATP + H2O = ADP + phosphate + H(+). In terms of biological role, ATP-dependent RNA helicase required for 60S ribosomal subunit synthesis. Involved in efficient pre-rRNA processing, predominantly at site A3, which is necessary for the normal formation of 25S and 5.8S rRNAs. The sequence is that of ATP-dependent RNA helicase DBP3 (DBP3) from Eremothecium gossypii (strain ATCC 10895 / CBS 109.51 / FGSC 9923 / NRRL Y-1056) (Yeast).